The chain runs to 89 residues: Small ribosomal subunit protein uS17 (89 aa).

It belongs to the universal ribosomal protein uS17 family. As to quaternary structure, part of the 30S ribosomal subunit.

Functionally, one of the primary rRNA binding proteins, it binds specifically to the 5'-end of 16S ribosomal RNA. The chain is Small ribosomal subunit protein uS17 from Delftia acidovorans (strain DSM 14801 / SPH-1).